The following is a 151-amino-acid chain: Large ribosomal subunit protein bL9 (151 aa).

Belongs to the bacterial ribosomal protein bL9 family.

Its function is as follows. Binds to the 23S rRNA. In Francisella tularensis subsp. holarctica (strain LVS), this protein is Large ribosomal subunit protein bL9.